The chain runs to 258 residues: Protein UL24 homolog (258 aa).

This sequence belongs to the herpesviridae UL24 family.

The protein resides in the virion. Its subcellular location is the host cytoplasm. The protein localises to the host nucleus. It is found in the host nucleolus. It localises to the host Golgi apparatus. Functionally, may participate in nuclear egress of viral particles. Plays a role in the dispersal of several host nucleolar proteins including NCL/nucleolin and NPM1. Since deletion of host NCL/nucleolin negatively impact on nuclear egress, UL24 supposedly acts on this process through its effect on host nucleoli. In Varicella-zoster virus (strain Dumas) (HHV-3), this protein is Protein UL24 homolog.